The sequence spans 299 residues: Trans-aconitate 3-methyltransferase (299 aa).

Serine 2 bears the N-acetylserine mark.

The protein belongs to the methyltransferase superfamily. Tam family.

The protein localises to the cytoplasm. The enzyme catalyses trans-aconitate + S-adenosyl-L-methionine = (E)-2-(methoxycarbonylmethyl)but-2-enedioate + S-adenosyl-L-homocysteine. In terms of biological role, catalyzes the S-adenosylmethionine monomethyl esterification of trans-aconitate and 3-isopropylmalate at high affinity and of other molecules like cis-aconitate, isocitrate, and citrate at lower velocities and affinities. The function of trans-aconitate methylation appears to be in reducing the toxicity of this spontaneous breakdown product of cis-aconitate. The role of 3-isopropylmalate methylation is unclear but may represent a metabolic branch at 3-isopropylmalate, where some of the material is taken in the pathway leading to leucine and some is taken in a pathway to the 3-isopropylmalate methyl ester, a molecule that provides a signal to switch from vegetative to invasive growth in response to amino acid starvation. The protein is Trans-aconitate 3-methyltransferase (TMT1) of Saccharomyces cerevisiae (strain YJM789) (Baker's yeast).